A 145-amino-acid polypeptide reads, in one-letter code: Large ribosomal subunit protein bL19 (145 aa).

The segment covering 114–136 has biased composition (basic and acidic residues); it reads IAEKMESPAAKATREAAKKEAKA. The disordered stretch occupies residues 114-145; it reads IAEKMESPAAKATREAAKKEAKAAKKNAAPAE.

Belongs to the bacterial ribosomal protein bL19 family.

Its function is as follows. This protein is located at the 30S-50S ribosomal subunit interface and may play a role in the structure and function of the aminoacyl-tRNA binding site. This Methylocella silvestris (strain DSM 15510 / CIP 108128 / LMG 27833 / NCIMB 13906 / BL2) protein is Large ribosomal subunit protein bL19.